Here is a 633-residue protein sequence, read N- to C-terminus: Extracellular metalloproteinase 3 (633 aa).

The signal sequence occupies residues 1–18; sequence MHGLLLAGLLALPMNVLA. A propeptide spanning residues 19 to 246 is cleaved from the precursor; that stretch reads HPAEQHASNV…VHNVVDYVAS (228 aa). Residue asparagine 410 is glycosylated (N-linked (GlcNAc...) asparagine). Histidine 429 contributes to the Zn(2+) binding site. The active site involves glutamate 430. Residue histidine 433 coordinates Zn(2+). Residues asparagine 480 and asparagine 622 are each glycosylated (N-linked (GlcNAc...) asparagine).

It belongs to the peptidase M36 family. Zn(2+) serves as cofactor.

Its subcellular location is the secreted. Functionally, secreted metalloproteinase probably acting as a virulence factor. In Trichophyton tonsurans (Scalp ringworm fungus), this protein is Extracellular metalloproteinase 3 (MEP3).